A 653-amino-acid polypeptide reads, in one-letter code: Sulfate transporter 1.2 (653 aa).

Residues 1–30 (MSSRAHPVDGSPATDGGHVPMKPSPTRHKV) are disordered. The Cytoplasmic segment spans residues 1 to 91 (MSSRAHPVDG…GRNYTFKKFR (91 aa)). A helical membrane pass occupies residues 92 to 112 (GDLISGLTIASLCIPQDIGYA). Topologically, residues 113–116 (KLAN) are extracellular. The chain crosses the membrane as a helical span at residues 117 to 137 (LDPKYGLYSSFVPPLVYACMG). Topologically, residues 138–141 (SSRD) are cytoplasmic. A helical transmembrane segment spans residues 142–162 (IAIGPVAVVSLLLGTLLRAEI). At 163–173 (DPNTSPDEYLR) the chain is on the extracellular side. 2 helical membrane passes run 174 to 194 (LAFT…FFRL) and 195 to 215 (GFLI…GAAI). Topologically, residues 216-253 (TIALQQLKGFLGIKKFTKKTDIISVLESVFKAAHHGWN) are extracellular. A helical transmembrane segment spans residues 254-274 (WQTILIGASFLTFLLTSKIIG). Over 275–280 (KKSKKL) the chain is Cytoplasmic. The helical transmembrane segment at 281–301 (FWVPAIAPLISVIVSTFFVYI) threads the bilayer. At 302-339 (TRADKQGVQIVKHLDQGINPSSFHLIYFTGDNLAKGIR) the chain is on the extracellular side. Residues 340 to 360 (IGVVAGMVALTEAVAIGRTFA) traverse the membrane as a helical segment. The Cytoplasmic segment spans residues 361 to 372 (AMKDYQIDGNKE). The helical transmembrane segment at 373 to 393 (MVALGMMNVVGSMSSCYVATG) threads the bilayer. Residues 394-409 (SFSRSAVNFMAGCQTA) are Extracellular-facing. A helical membrane pass occupies residues 410 to 430 (VSNIIMSIVVLLTLLFLTPLF). At 431–438 (KYTPNAIL) the chain is on the cytoplasmic side. A helical transmembrane segment spans residues 439–459 (AAIIINAVIPLIDIQAAILIF). At 460–466 (KVDKLDF) the chain is on the extracellular side. The helical transmembrane segment at 467–487 (IACIGAFFGVIFVSVEIGLLI) threads the bilayer. Residues 488–653 (AVSISFAKIL…ACCPKLSNEV (166 aa)) lie on the Cytoplasmic side of the membrane. In terms of domain architecture, STAS spans 522 to 645 (QYPEATMVPG…LTVADAVEAC (124 aa)).

Belongs to the SLC26A/SulP transporter (TC 2.A.53.1) family. Homodimer. Interacts with OASA1 through its STAS domain. As to expression, expressed in lateral root cap, root hairs, epidermal and cortical cells of roots.

Its subcellular location is the cell membrane. Its activity is regulated as follows. Interaction with OASA1 negatively impacts the transporter activity. High-affinity H(+)/sulfate cotransporter that mediates the uptake of the environmental sulfate by plant roots. Plays a central role in the regulation of sulfate assimilation. Unable to transport molybdate. This is Sulfate transporter 1.2 (SULTR1;2) from Arabidopsis thaliana (Mouse-ear cress).